A 942-amino-acid polypeptide reads, in one-letter code: Apolipoprotein B receptor (942 aa).

Disordered stretches follow at residues 66–212 (GLRS…VTED), 240–269 (ERMV…QAML), 283–487 (DSLG…SPER), 501–607 (AGPE…VPWE), and 671–942 (EGRG…PKPQ). 5 stretches are compositionally biased toward basic and acidic residues: residues 106 to 123 (QAER…DARG), 132 to 143 (PEAEPGTHRDRS), 240 to 252 (ERMV…ERAR), 312 to 330 (EADK…EAEV), and 338 to 352 (EAER…HIAE). Over residues 353-370 (EEAMGEQETEGSFEDEER) the composition is skewed to acidic residues. Ser-364 is subject to Phosphoserine. The span at 384 to 397 (EEVRAEESSREKRN) shows a compositional bias: basic and acidic residues. Over residues 415–425 (PDWEDSPEVST) the composition is skewed to acidic residues. Basic and acidic residues-rich tracts occupy residues 444–458 (LRVK…ELVR) and 466–475 (QLEEGQKGQE). Residues Ser-484 and Ser-520 each carry the phosphoserine modification. 2 stretches are compositionally biased toward basic and acidic residues: residues 514–531 (GVDR…EAGK) and 672–687 (GRGE…ETTE). The span at 709 to 721 (QEIDGTEEGEQAE) shows a compositional bias: acidic residues. Over residues 837–853 (SRLDVSVPRSRVLLSRS) the composition is skewed to low complexity. The segment covering 854–863 (SSRRRSRPSF) has biased composition (basic residues).

In terms of assembly, homodimer. Post-translationally, there are 2 forms in macrophages, the membrane-binding proteins 200 kDa (MBP 200) and 235 kDa (MBP 235), that can be reduced into a single active ligand-binding species with intermediate mobility (MBP 200R). In terms of tissue distribution, highly expressed in spleen, lung and skeletal muscle, and weakly in brain, heart, kidney, and testis.

It localises to the cell membrane. Macrophage receptor that binds to the apolipoprotein B48 (APOB) of dietary triglyceride (TG)-rich lipoproteins (TRL) or to a like domain of APOB in hypertriglyceridemic very low density lipoprotein (HTG-VLDL). Binds and internalizes TRL when out of the context of the macrophage. May provide essential lipids to reticuloendothelial cells. Could also be involved in foam cell formation with elevated TRL and remnant lipoprotein (RLP). Mediates the rapid high-affinity uptake of chylomicrons (CM), HTG-VLDL, and trypsinized (tryp) VLDL devoid of APOE in vitro in macrophages. The protein is Apolipoprotein B receptor of Mus musculus (Mouse).